Consider the following 74-residue polypeptide: Protein SlyX homolog (74 aa).

Positions 52–74 (LKQMQENQSTDSDPADEPPPPHY) are disordered.

It belongs to the SlyX family.

This Idiomarina loihiensis (strain ATCC BAA-735 / DSM 15497 / L2-TR) protein is Protein SlyX homolog.